A 311-amino-acid polypeptide reads, in one-letter code: DNA replication terminus site-binding protein (311 aa).

It belongs to the Tus family.

The protein localises to the cytoplasm. Functionally, trans-acting protein required for termination of DNA replication. Binds to DNA replication terminator sequences (terA to terF) to prevent the passage of replication forks. The termination efficiency will be affected by the affinity of this protein for the terminator sequence. This chain is DNA replication terminus site-binding protein, found in Yersinia pestis.